The primary structure comprises 505 residues: Lysine--tRNA ligase (505 aa).

The Mg(2+) site is built by E415 and E422.

Belongs to the class-II aminoacyl-tRNA synthetase family. As to quaternary structure, homodimer. It depends on Mg(2+) as a cofactor.

The protein localises to the cytoplasm. It carries out the reaction tRNA(Lys) + L-lysine + ATP = L-lysyl-tRNA(Lys) + AMP + diphosphate. This is Lysine--tRNA ligase from Escherichia coli O157:H7.